The sequence spans 428 residues: RNA-binding protein 34 (428 aa).

2 disordered regions span residues 1 to 106 and 127 to 152; these read MALR…KVKV and DLEE…TDGE. Residue K147 is modified to N6-acetyllysine. RRM domains lie at 183 to 278 and 285 to 362; these read RTVF…LASE and RSVF…RSVN. A Glycyl lysine isopeptide (Lys-Gly) (interchain with G-Cter in SUMO2) cross-link involves residue K240. Residue S286 is modified to Phosphoserine. Residues 361-428 form a disordered region; that stretch reads VNKEKLKQQN…GQTKKPRKQK (68 aa). Over residues 408 to 428 the composition is skewed to basic residues; that stretch reads LMKKKKGQKKKGQTKKPRKQK.

This sequence belongs to the RRM RBM34 family.

It localises to the nucleus. It is found in the nucleolus. In Rattus norvegicus (Rat), this protein is RNA-binding protein 34 (Rbm34).